The chain runs to 123 residues: Large ribosomal subunit protein uL14 (123 aa).

The protein belongs to the universal ribosomal protein uL14 family. As to quaternary structure, part of the 50S ribosomal subunit. Forms a cluster with proteins L3 and L19. In the 70S ribosome, L14 and L19 interact and together make contacts with the 16S rRNA in bridges B5 and B8.

Its function is as follows. Binds to 23S rRNA. Forms part of two intersubunit bridges in the 70S ribosome. This Wigglesworthia glossinidia brevipalpis protein is Large ribosomal subunit protein uL14.